We begin with the raw amino-acid sequence, 141 residues long: Nucleoside triphosphatase NudI (141 aa).

In terms of domain architecture, Nudix hydrolase spans 1–141 (MRQRTIVCPI…RLTFTQKGLL (141 aa)). A Nudix box motif is present at residues 38 to 59 (GGMEPGETMEEALRREIREELG).

This sequence belongs to the Nudix hydrolase family. NudI subfamily. Monomer. Requires Mg(2+) as cofactor.

The catalysed reaction is a ribonucleoside 5'-triphosphate + H2O = a ribonucleoside 5'-phosphate + diphosphate + H(+). The enzyme catalyses a 2'-deoxyribonucleoside 5'-triphosphate + H2O = a 2'-deoxyribonucleoside 5'-phosphate + diphosphate + H(+). It carries out the reaction dUTP + H2O = dUMP + diphosphate + H(+). It catalyses the reaction dTTP + H2O = dTMP + diphosphate + H(+). The catalysed reaction is dCTP + H2O = dCMP + diphosphate + H(+). Its function is as follows. Catalyzes the hydrolysis of nucleoside triphosphates, with a preference for pyrimidine deoxynucleoside triphosphates (dUTP, dTTP and dCTP). The chain is Nucleoside triphosphatase NudI from Enterobacter sp. (strain 638).